A 190-amino-acid chain; its full sequence is Elongation factor P 2 (190 aa).

Belongs to the elongation factor P family.

It localises to the cytoplasm. The protein operates within protein biosynthesis; polypeptide chain elongation. Involved in peptide bond synthesis. Stimulates efficient translation and peptide-bond synthesis on native or reconstituted 70S ribosomes in vitro. Probably functions indirectly by altering the affinity of the ribosome for aminoacyl-tRNA, thus increasing their reactivity as acceptors for peptidyl transferase. This Chlamydia caviae (strain ATCC VR-813 / DSM 19441 / 03DC25 / GPIC) (Chlamydophila caviae) protein is Elongation factor P 2 (efp2).